A 517-amino-acid polypeptide reads, in one-letter code: FERM domain-containing protein 5 (517 aa).

Positions 17–298 constitute an FERM domain; sequence YSCTVRLLDD…ENQAFYKLEK (282 aa). Residues 308 to 353 are interaction with ROCK1; sequence SNLFFKGSRFRYSGRVAKEVMESSAKIKREPPEIHRAGMVPSRSCP. The segment at 344-367 is disordered; it reads AGMVPSRSCPSITHGPRLSSVPRT. Ser375 carries the post-translational modification Phosphoserine. Disordered stretches follow at residues 385 to 408 and 485 to 517; these read DSAH…VRSS and GHGG…VPLD. The span at 388-398 shows a compositional bias: polar residues; sequence HSTPVRSSSHG. The span at 498 to 517 shows a compositional bias: low complexity; sequence KGPQLQQQQWKGWGKSVPLD.

Interacts with CTNND1, ITGB5 (via cytoplasmic domain) and ROCK1.

Its subcellular location is the cell junction. The protein resides in the adherens junction. Its function is as follows. May be involved in regulation of cell migration. May regulate cell-matrix interactions via its interaction with ITGB5 and modifying ITGB5 cytoplasmic tail interactions such as with FERMT2 and TLN1. May regulate ROCK1 kinase activity possibly involved in regulation of actin stress fiber formation. The sequence is that of FERM domain-containing protein 5 (Frmd5) from Mus musculus (Mouse).